The primary structure comprises 68 residues: Large ribosomal subunit protein uL29 (68 aa).

The protein belongs to the universal ribosomal protein uL29 family.

The sequence is that of Large ribosomal subunit protein uL29 from Picosynechococcus sp. (strain ATCC 27264 / PCC 7002 / PR-6) (Agmenellum quadruplicatum).